Reading from the N-terminus, the 169-residue chain is Cell division inhibitor SulA (169 aa).

Positions 106-112 (ALRTGNY) are ftsZ binding. Residues 162–169 (KIHSNLYH) form a lon protease binding region.

Belongs to the SulA family. As to quaternary structure, interacts with FtsZ. Is rapidly cleaved and degraded by the Lon protease once DNA damage is repaired.

In terms of biological role, component of the SOS system and an inhibitor of cell division. Accumulation of SulA causes rapid cessation of cell division and the appearance of long, non-septate filaments. In the presence of GTP, binds a polymerization-competent form of FtsZ in a 1:1 ratio, thus inhibiting FtsZ polymerization and therefore preventing it from participating in the assembly of the Z ring. This mechanism prevents the premature segregation of damaged DNA to daughter cells during cell division. The protein is Cell division inhibitor SulA of Shigella flexneri serotype 5b (strain 8401).